We begin with the raw amino-acid sequence, 428 residues long: Enolase (428 aa).

Q163 lines the (2R)-2-phosphoglycerate pocket. The Proton donor role is filled by E205. Mg(2+)-binding residues include D242, E286, and D313. (2R)-2-phosphoglycerate-binding residues include K338, R367, S368, and K389. The active-site Proton acceptor is K338.

It belongs to the enolase family. Mg(2+) is required as a cofactor.

Its subcellular location is the cytoplasm. The protein resides in the secreted. The protein localises to the cell surface. It carries out the reaction (2R)-2-phosphoglycerate = phosphoenolpyruvate + H2O. It functions in the pathway carbohydrate degradation; glycolysis; pyruvate from D-glyceraldehyde 3-phosphate: step 4/5. Functionally, catalyzes the reversible conversion of 2-phosphoglycerate (2-PG) into phosphoenolpyruvate (PEP). It is essential for the degradation of carbohydrates via glycolysis. This Bordetella petrii (strain ATCC BAA-461 / DSM 12804 / CCUG 43448) protein is Enolase.